Reading from the N-terminus, the 208-residue chain is FMN-dependent NADH:quinone oxidoreductase 1 (208 aa).

17–19 provides a ligand contact to FMN; it reads SVS.

This sequence belongs to the azoreductase type 1 family. In terms of assembly, homodimer. It depends on FMN as a cofactor.

It carries out the reaction 2 a quinone + NADH + H(+) = 2 a 1,4-benzosemiquinone + NAD(+). The enzyme catalyses N,N-dimethyl-1,4-phenylenediamine + anthranilate + 2 NAD(+) = 2-(4-dimethylaminophenyl)diazenylbenzoate + 2 NADH + 2 H(+). Functionally, quinone reductase that provides resistance to thiol-specific stress caused by electrophilic quinones. Its function is as follows. Also exhibits azoreductase activity. Catalyzes the reductive cleavage of the azo bond in aromatic azo compounds to the corresponding amines. The polypeptide is FMN-dependent NADH:quinone oxidoreductase 1 (Listeria monocytogenes serotype 4b (strain F2365)).